Consider the following 648-residue polypeptide: tRNA 5-methylaminomethyl-2-thiouridine biosynthesis bifunctional protein MnmC (648 aa).

Positions 1 to 228 (MTDRLVPASL…VDDLLVGEYA (228 aa)) are tRNA (mnm(5)s(2)U34)-methyltransferase. An FAD-dependent cmnm(5)s(2)U34 oxidoreductase region spans residues 252–648 (IGAGLAGCAV…LRARRVGRAG (397 aa)).

The protein in the N-terminal section; belongs to the methyltransferase superfamily. tRNA (mnm(5)s(2)U34)-methyltransferase family. In the C-terminal section; belongs to the DAO family. FAD serves as cofactor.

The protein resides in the cytoplasm. It catalyses the reaction 5-aminomethyl-2-thiouridine(34) in tRNA + S-adenosyl-L-methionine = 5-methylaminomethyl-2-thiouridine(34) in tRNA + S-adenosyl-L-homocysteine + H(+). Catalyzes the last two steps in the biosynthesis of 5-methylaminomethyl-2-thiouridine (mnm(5)s(2)U) at the wobble position (U34) in tRNA. Catalyzes the FAD-dependent demodification of cmnm(5)s(2)U34 to nm(5)s(2)U34, followed by the transfer of a methyl group from S-adenosyl-L-methionine to nm(5)s(2)U34, to form mnm(5)s(2)U34. The polypeptide is tRNA 5-methylaminomethyl-2-thiouridine biosynthesis bifunctional protein MnmC (Burkholderia lata (strain ATCC 17760 / DSM 23089 / LMG 22485 / NCIMB 9086 / R18194 / 383)).